Reading from the N-terminus, the 420-residue chain is ATP phosphoribosyltransferase regulatory subunit (420 aa).

This sequence belongs to the class-II aminoacyl-tRNA synthetase family. HisZ subfamily. Heteromultimer composed of HisG and HisZ subunits.

It is found in the cytoplasm. The protein operates within amino-acid biosynthesis; L-histidine biosynthesis; L-histidine from 5-phospho-alpha-D-ribose 1-diphosphate: step 1/9. Its function is as follows. Required for the first step of histidine biosynthesis. May allow the feedback regulation of ATP phosphoribosyltransferase activity by histidine. This is ATP phosphoribosyltransferase regulatory subunit from Bacillus cereus (strain ATCC 10987 / NRS 248).